Reading from the N-terminus, the 339-residue chain is Uracil nucleotide/cysteinyl leukotriene receptor (339 aa).

The Extracellular segment spans residues 1–36 (MDGLETALPSLTDNASLAYSEQCGQETPLENMLFAC). Asparagine 14 carries an N-linked (GlcNAc...) asparagine glycan. The chain crosses the membrane as a helical span at residues 37–57 (FYLLDFILAFVGNALALWLFI). At 58–64 (WDHKSGT) the chain is on the cytoplasmic side. The helical transmembrane segment at 65–85 (PANVFLMHLAVADLSCVLVLP) threads the bilayer. The Extracellular segment spans residues 86-105 (TRLVYHFSGNHWPFGEIPCR). Residues cysteine 104 and cysteine 181 are joined by a disulfide bond. A helical membrane pass occupies residues 106–126 (LTGFLFYLNMYASIYFLTCIS). Residues 127-147 (ADRFLAIVHPVKSLKLRRPLY) lie on the Cytoplasmic side of the membrane. The helical transmembrane segment at 148–168 (AHLACAFLWIVVAVAMAPLLV) threads the bilayer. At 169 to 195 (SPQTVQTNHTVVCLQLYREKASHHALA) the chain is on the extracellular side. A glycan (N-linked (GlcNAc...) asparagine) is linked at asparagine 176. Residues 196-216 (SLAVAFTFPFITTVTCYLLII) traverse the membrane as a helical segment. Over 217–232 (RSLRQGPRIEKHLKNK) the chain is Cytoplasmic. A helical membrane pass occupies residues 233–253 (AVRMIAMVLAIFLICFVPYHI). Over 254 to 280 (HRSVYVLHYRGGGTSCSAQRALALGNR) the chain is Extracellular. A helical membrane pass occupies residues 281–301 (ITSCLTSLNGALDPVMYFFVA). Residues 302–339 (EKFRHALCNLLCSKRLTGPPPSFEGKTNESSLSARSEL) lie on the Cytoplasmic side of the membrane.

The protein belongs to the G-protein coupled receptor 1 family. In terms of tissue distribution, expressed in brain, kidney, and heart. Highest level in brain.

It is found in the cell membrane. Dual specificity receptor for uracil nucleotides and cysteinyl leukotrienes (CysLTs). Signals through G(i) and inhibition of adenylyl cyclase. May mediate brain damage by nucleotides and CysLTs following ischemia. In Rattus norvegicus (Rat), this protein is Uracil nucleotide/cysteinyl leukotriene receptor.